A 2000-amino-acid chain; its full sequence is E3 ubiquitin-protein ligase TTC3 (2000 aa).

The interval 20–249 is interaction with POLG; the sequence is MDDFAEGGLS…RHSCMQCVKQ (230 aa). TPR repeat units lie at residues 250 to 283 and 284 to 317; these read GELM…RPEN and HLLY…KNTW. The residue at position 397 (Ser397) is a Phosphoserine. A disordered region spans residues 442 to 478; the sequence is CDCHPEFLPPPSQPPRHKGKQKSRNNESEKPSSNSQV. TPR repeat units lie at residues 556 to 592 and 596 to 629; these read VLVV…YPNE and CLAY…ICRL. Residues 804 to 828 are disordered; the sequence is AQERMEEDLRESNPPKPEEPEETVE. Ser1029 carries the phosphoserine modification. Disordered regions lie at residues 1041–1087, 1233–1308, 1423–1448, 1806–1839, and 1894–1947; these read NKGK…GPFA, FQPD…PEDA, QSST…SSDS, LEVK…QSQK, and EEQK…VPAP. Over residues 1059–1070 the composition is skewed to polar residues; the sequence is GTASVTPSSETV. Ser1080 is modified (phosphoserine). Residues 1268-1277 are compositionally biased toward low complexity; it reads DSDSSSGSAS. The span at 1829-1839 shows a compositional bias: polar residues; it reads GQATRSSQSQK. A compositionally biased stretch (basic and acidic residues) spans 1894–1911; sequence EEQKKKKPNPGKDKKTSE. Low complexity predominate over residues 1912–1934; that stretch reads AHPAASVSKSSPSPPLAAAGPSA. The RING-type; atypical zinc finger occupies 1952 to 1991; the sequence is CQICHEIFKSKNMRVLKCGHKFHKGCFKQWLKGQSTCPTC.

Interacts (when phosphorylated on Ser-397) with AKT1, AKT2 and AKT3 (when phosphorylated). Interacts with CIT. Interacts with POLG. Interacts with HSP70. Interacts with SMURF2. Phosphorylation on Ser-397 by Akt is required for ubiquitin ligase activity. Post-translationally, proteolytically cleaved into differently sized N- and C-terminal fragments.

It is found in the nucleus. It localises to the cytoplasm. Its subcellular location is the golgi apparatus. It catalyses the reaction S-ubiquitinyl-[E2 ubiquitin-conjugating enzyme]-L-cysteine + [acceptor protein]-L-lysine = [E2 ubiquitin-conjugating enzyme]-L-cysteine + N(6)-ubiquitinyl-[acceptor protein]-L-lysine.. The protein operates within protein modification; protein ubiquitination. In terms of biological role, E3 ubiquitin-protein ligase which catalyzes the formation of 'Lys-48'-polyubiquitin chains. Mediates the ubiquitination and subsequent degradation of phosphorylated Akt (AKT1, AKT2 and AKT3) in the nucleus. Acts as a terminal regulator of Akt signaling after activation; its phosphorylation by Akt, which is a prerequisite for ubiquitin ligase activity, suggests the existence of a regulation mechanism required to control Akt levels after activation. Positively regulates TGFB1-induced epithelial-mesenchymal transition and myofibroblast differentiation by mediating the ubiquitination and subsequent degradation of SMURF2. Regulates neuronal differentiation by regulating actin remodeling and Golgi organization via a signaling cascade involving RHOA, CIT and ROCK. Inhibits cell proliferation. The polypeptide is E3 ubiquitin-protein ligase TTC3 (Rattus norvegicus (Rat)).